A 208-amino-acid chain; its full sequence is Thymidylate kinase (208 aa).

11–18 (GGEGAGKS) is an ATP binding site.

The protein belongs to the thymidylate kinase family.

It catalyses the reaction dTMP + ATP = dTDP + ADP. In terms of biological role, phosphorylation of dTMP to form dTDP in both de novo and salvage pathways of dTTP synthesis. This chain is Thymidylate kinase (tmk), found in Caulobacter vibrioides (strain ATCC 19089 / CIP 103742 / CB 15) (Caulobacter crescentus).